The chain runs to 222 residues: Peroxiredoxin (222 aa).

The 156-residue stretch at 2-157 (VVLGQKFPEV…ILRLVEALQT (156 aa)) folds into the Thioredoxin domain. Cys44 functions as the Cysteine sulfenic acid (-SOH) intermediate in the catalytic mechanism. Residue Arg120 participates in substrate binding. Cys211 and Cys217 are oxidised to a cystine.

The protein belongs to the peroxiredoxin family. Prx6 subfamily. In terms of assembly, homodecamer. Pentamer of dimers that assemble into a ring structure.

The protein resides in the cytoplasm. It catalyses the reaction a hydroperoxide + [thioredoxin]-dithiol = an alcohol + [thioredoxin]-disulfide + H2O. In terms of biological role, thiol-specific peroxidase that catalyzes the reduction of hydrogen peroxide and organic hydroperoxides to water and alcohols, respectively. Plays a role in cell protection against oxidative stress by detoxifying peroxides. In Nanoarchaeum equitans (strain Kin4-M), this protein is Peroxiredoxin.